The primary structure comprises 363 residues: Putative serine/threonine-protein kinase gskl-1 (363 aa).

The region spanning 20–304 is the Protein kinase domain; that stretch reads FGAHKLCGSG…AIDVLKMPLF (285 aa). ATP-binding positions include 26–34 and Lys-50; that span reads CGSGRFSNV. Asp-146 functions as the Proton acceptor in the catalytic mechanism. Residues 311–363 are disordered; sequence PPKKRSNGVEMPNLASYTEMHHKREPETEVVADIQTTEKAEKESDSTNEELED. A compositionally biased stretch (basic and acidic residues) spans 346 to 355; the sequence is TTEKAEKESD.

Belongs to the protein kinase superfamily. Ser/Thr protein kinase family. In terms of tissue distribution, expressed during multiple stages of spermatogenesis, in males and hermaphrodites (at protein level).

The protein resides in the cytoplasm. The protein localises to the cell projection. It is found in the pseudopodium. It catalyses the reaction L-seryl-[protein] + ATP = O-phospho-L-seryl-[protein] + ADP + H(+). It carries out the reaction L-threonyl-[protein] + ATP = O-phospho-L-threonyl-[protein] + ADP + H(+). May be an autophosphorylating tyrosine kinase, a bifunctional (serine/tyrosine-specific) protein kinase, or a serine kinase that is a substrate for an associated tyrosine kinase. Acting in concert with putative serine/threonine-protein kinase gskl-2, required for sister chromatid segregation and spermatid budding during male meiosis. Plays a role in regulating female meiosis II, together with gskl-2. Involved in sperm pseudopod formation and function, together with gskl-2. In Caenorhabditis elegans, this protein is Putative serine/threonine-protein kinase gskl-1.